Consider the following 232-residue polypeptide: Ubiquinone biosynthesis O-methyltransferase (232 aa).

R36, G55, D76, and M120 together coordinate S-adenosyl-L-methionine.

It belongs to the methyltransferase superfamily. UbiG/COQ3 family.

It catalyses the reaction a 3-demethylubiquinol + S-adenosyl-L-methionine = a ubiquinol + S-adenosyl-L-homocysteine + H(+). The catalysed reaction is a 3-(all-trans-polyprenyl)benzene-1,2-diol + S-adenosyl-L-methionine = a 2-methoxy-6-(all-trans-polyprenyl)phenol + S-adenosyl-L-homocysteine + H(+). It participates in cofactor biosynthesis; ubiquinone biosynthesis. Functionally, O-methyltransferase that catalyzes the 2 O-methylation steps in the ubiquinone biosynthetic pathway. The chain is Ubiquinone biosynthesis O-methyltransferase from Paraburkholderia phytofirmans (strain DSM 17436 / LMG 22146 / PsJN) (Burkholderia phytofirmans).